A 1194-amino-acid polypeptide reads, in one-letter code: Immunoglobulin superfamily member 3 (1194 aa).

The first 19 residues, 1 to 19 (MKCFFPVLSCLAVLGVVSA), serve as a signal peptide directing secretion. 8 consecutive Ig-like C2-type domains span residues 20-138 (QRQV…AKMN), 143-262 (PDSL…WYAM), 276-386 (PTDK…KTVT), 401-539 (PIIV…ISIT), 545-661 (FAVT…WTRL), 676-803 (PVTK…EEVS), 813-945 (PDSR…TALT), and 949-1097 (PDAS…YRLT). Residues 20–1124 (QRQVTVQEGP…LQSIICSNDA (1105 aa)) are Extracellular-facing. 2 disulfides stabilise this stretch: Cys-42–Cys-120 and Cys-167–Cys-246. The N-linked (GlcNAc...) asparagine glycan is linked to Asn-43. Residues 250-252 (EWI) carry the EWI motif motif. A disulfide bridge links Cys-302 with Cys-376. A glycan (N-linked (GlcNAc...) asparagine) is linked at Asn-418. 2 cysteine pairs are disulfide-bonded: Cys-432-Cys-511 and Cys-566-Cys-645. An N-linked (GlcNAc...) asparagine glycan is attached at Asn-655. Disulfide bonds link Cys-701–Cys-782, Cys-838–Cys-918, and Cys-974–Cys-1080. Asn-842 carries an N-linked (GlcNAc...) asparagine glycan. A disordered region spans residues 997–1033 (AGGKRSSPGLEEQEEEREEEEEEDDDDDDDPTERTAL). The span at 1007–1027 (EEQEEEREEEEEEDDDDDDDP) shows a compositional bias: acidic residues. A glycan (N-linked (GlcNAc...) asparagine) is linked at Asn-1077. Residues 1125-1145 (LFYFVFFYPFPIFGILIITIL) form a helical membrane-spanning segment. Residues 1146–1194 (LVRFKSRNSSKNSDGKNGVPLLWIKEPHLNYSPTCLEPPVLSIHPGAID) are Cytoplasmic-facing.

Expressed in a wide range of tissues with High expression in Placenta, kidney and lung.

The protein localises to the membrane. The protein is Immunoglobulin superfamily member 3 (IGSF3) of Homo sapiens (Human).